Consider the following 175-residue polypeptide: 3-hydroxydecanoyl-[acyl-carrier-protein] dehydratase (175 aa).

H74 is a catalytic residue.

This sequence belongs to the thioester dehydratase family. FabA subfamily. In terms of assembly, homodimer.

The protein resides in the cytoplasm. The enzyme catalyses a (3R)-hydroxyacyl-[ACP] = a (2E)-enoyl-[ACP] + H2O. The catalysed reaction is (3R)-hydroxydecanoyl-[ACP] = (2E)-decenoyl-[ACP] + H2O. It carries out the reaction (2E)-decenoyl-[ACP] = (3Z)-decenoyl-[ACP]. It functions in the pathway lipid metabolism; fatty acid biosynthesis. In terms of biological role, necessary for the introduction of cis unsaturation into fatty acids. Catalyzes the dehydration of (3R)-3-hydroxydecanoyl-ACP to E-(2)-decenoyl-ACP and then its isomerization to Z-(3)-decenoyl-ACP. Can catalyze the dehydratase reaction for beta-hydroxyacyl-ACPs with saturated chain lengths up to 16:0, being most active on intermediate chain length. The protein is 3-hydroxydecanoyl-[acyl-carrier-protein] dehydratase of Alcanivorax borkumensis (strain ATCC 700651 / DSM 11573 / NCIMB 13689 / SK2).